Here is a 1794-residue protein sequence, read N- to C-terminus: Non-reducing polyketide synthase nscA (1794 aa).

The segment at 19–256 is N-terminal acylcarrier protein transacylase domain (SAT); the sequence is DLKDLFRRLH…PLPVYDGLCH (238 aa). The Ketosynthase family 3 (KS3) domain maps to 389–822; that stretch reads ASKLAIVGMA…GGNTTVLLED (434 aa). The segment covering 428–440 has biased composition (basic and acidic residues); the sequence is DRFDLNTHYDPTG. Residues 428–448 form a disordered region; sequence DRFDLNTHYDPTGKTENATQT. Residues Cys562, His697, and His740 each act as for beta-ketoacyl synthase activity in the active site. A malonyl-CoA:ACP transacylase (MAT) domain region spans residues 927-1230; the sequence is TFTGQGAYYS…SVISSCRRNE (304 aa). The tract at residues 1314–1633 is product template (PT) domain; the sequence is TSLVHQITTE…RLLMDRFFSP (320 aa). Residues 1318 to 1454 form an N-terminal hotdog fold region; the sequence is HQITTETVEA…CVVRFEDPAA (137 aa). The PKS/mFAS DH domain occupies 1318–1628; the sequence is HQITTETVEA…FRRVPRLLMD (311 aa). The active-site Proton acceptor; for dehydratase activity is the His1350. Residues 1482–1628 are C-terminal hotdog fold; it reads ASKLSKPLAY…FRRVPRLLMD (147 aa). Asp1539 functions as the Proton donor; for dehydratase activity in the catalytic mechanism. The interval 1637–1719 is disordered; that stretch reads SHTEKQLQET…ATSDRGDSTD (83 aa). Over residues 1644-1655 the composition is skewed to polar residues; the sequence is QETAPSATNVKK. In terms of domain architecture, Carrier spans 1717 to 1794; the sequence is STDAGVVGQC…EMTAWLEEYC (78 aa). An O-(pantetheine 4'-phosphoryl)serine modification is found at Ser1754.

Requires pantetheine 4'-phosphate as cofactor.

It participates in secondary metabolite biosynthesis. Non-reducing polyketide synthase; part of the gene cluster that mediates the biosynthesis of neosartoricin, a prenylated anthracenone that exhibits T-cell antiproliferative activity, suggestive of a physiological role as an immunosuppressive agent. The non-reducing polyketide synthase nscA probably synthesizes and cyclizes the decaketide backbone. The hydrolase nscB then mediates the product release through hydrolysis followed by spontaneous decarboxylation. The prenyltransferase nscD catalyzes the addition of the dimethylallyl group to the aromatic C5. The FAD-dependent monooxygenase nscC is then responsible for the stereospecific hydroxylation at C2. There is no gene encoding O-acetyltransferase in the nsc gene cluster; thus, the last step of 2-O-acetylation leading to neosartoricin may be catalyzed by an unidentified O-acetyltransferase. This is Non-reducing polyketide synthase nscA from Aspergillus fumigatus (strain ATCC MYA-4609 / CBS 101355 / FGSC A1100 / Af293) (Neosartorya fumigata).